The following is a 150-amino-acid chain: D-aminoacyl-tRNA deacylase (150 aa).

Positions 136–137 (GP) match the Gly-cisPro motif, important for rejection of L-amino acids motif.

The protein belongs to the DTD family. In terms of assembly, homodimer.

The protein localises to the cytoplasm. The enzyme catalyses glycyl-tRNA(Ala) + H2O = tRNA(Ala) + glycine + H(+). The catalysed reaction is a D-aminoacyl-tRNA + H2O = a tRNA + a D-alpha-amino acid + H(+). An aminoacyl-tRNA editing enzyme that deacylates mischarged D-aminoacyl-tRNAs. Also deacylates mischarged glycyl-tRNA(Ala), protecting cells against glycine mischarging by AlaRS. Acts via tRNA-based rather than protein-based catalysis; rejects L-amino acids rather than detecting D-amino acids in the active site. By recycling D-aminoacyl-tRNA to D-amino acids and free tRNA molecules, this enzyme counteracts the toxicity associated with the formation of D-aminoacyl-tRNA entities in vivo and helps enforce protein L-homochirality. This Staphylococcus aureus (strain Mu50 / ATCC 700699) protein is D-aminoacyl-tRNA deacylase.